The primary structure comprises 185 residues: Ribosome-recycling factor (185 aa).

Residues aspartate 137 to aspartate 166 form a disordered region.

This sequence belongs to the RRF family.

It localises to the cytoplasm. In terms of biological role, responsible for the release of ribosomes from messenger RNA at the termination of protein biosynthesis. May increase the efficiency of translation by recycling ribosomes from one round of translation to another. This is Ribosome-recycling factor from Agrobacterium fabrum (strain C58 / ATCC 33970) (Agrobacterium tumefaciens (strain C58)).